Consider the following 324-residue polypeptide: Pseudouridine-5'-phosphate glycosidase (324 aa).

The active-site Proton donor is E43. Residues K104 and V124 each coordinate substrate. D156 is a binding site for Mn(2+). Residue 158–160 coordinates substrate; the sequence is SAD. Residue K177 is the Nucleophile of the active site.

The protein belongs to the pseudouridine-5'-phosphate glycosidase family. Homotrimer. It depends on Mn(2+) as a cofactor.

The catalysed reaction is D-ribose 5-phosphate + uracil = psi-UMP + H2O. In terms of biological role, catalyzes the reversible cleavage of pseudouridine 5'-phosphate (PsiMP) to ribose 5-phosphate and uracil. Functions biologically in the cleavage direction, as part of a pseudouridine degradation pathway. This Salinispora tropica (strain ATCC BAA-916 / DSM 44818 / JCM 13857 / NBRC 105044 / CNB-440) protein is Pseudouridine-5'-phosphate glycosidase.